A 331-amino-acid polypeptide reads, in one-letter code: Tungstate uptake system ATP-binding protein TupC (331 aa).

One can recognise an ABC transporter domain in the interval isoleucine 2–isoleucine 230. Glycine 34–serine 41 lines the ATP pocket.

Belongs to the ABC transporter superfamily. The complex is composed of two ATP-binding proteins (TupC), two transmembrane proteins (TupB) and a solute-binding protein (TupA).

It carries out the reaction tungstate(in) + ATP + H2O = tungstate(out) + ADP + phosphate + H(+). Its function is as follows. Part of an ABC transporter complex involved in ultra-high affinity tungstate uptake. Probably responsible for energy coupling to the transport system. The polypeptide is Tungstate uptake system ATP-binding protein TupC (Campylobacter jejuni subsp. jejuni serotype O:2 (strain ATCC 700819 / NCTC 11168)).